Consider the following 409-residue polypeptide: Glutamyl-tRNA reductase (409 aa).

Substrate is bound by residues 46–49, S88, 93–95, and Q99; these read TCNR and ENE. C47 functions as the Nucleophile in the catalytic mechanism. Residue 164 to 169 coordinates NADP(+); the sequence is GNGMIA.

It belongs to the glutamyl-tRNA reductase family. Homodimer.

The catalysed reaction is (S)-4-amino-5-oxopentanoate + tRNA(Glu) + NADP(+) = L-glutamyl-tRNA(Glu) + NADPH + H(+). It participates in porphyrin-containing compound metabolism; protoporphyrin-IX biosynthesis; 5-aminolevulinate from L-glutamyl-tRNA(Glu): step 1/2. Catalyzes the NADPH-dependent reduction of glutamyl-tRNA(Glu) to glutamate 1-semialdehyde (GSA). This chain is Glutamyl-tRNA reductase, found in Thermoplasma acidophilum (strain ATCC 25905 / DSM 1728 / JCM 9062 / NBRC 15155 / AMRC-C165).